The sequence spans 518 residues: Membrane-bound lytic murein transglycosylase F (518 aa).

The first 21 residues, 1 to 21 (MKKLKINYLFIGILALLLAVA), serve as a signal peptide directing secretion. Positions 22-269 (LWPSIPWFGK…RIEEKYLGHG (248 aa)) are non-LT domain. Residues 270-518 (DDFDYVDTRT…SRKGSEEKQN (249 aa)) are LT domain. The active site involves E314.

In the N-terminal section; belongs to the bacterial solute-binding protein 3 family. It in the C-terminal section; belongs to the transglycosylase Slt family.

It is found in the cell outer membrane. It catalyses the reaction Exolytic cleavage of the (1-&gt;4)-beta-glycosidic linkage between N-acetylmuramic acid (MurNAc) and N-acetylglucosamine (GlcNAc) residues in peptidoglycan, from either the reducing or the non-reducing ends of the peptidoglycan chains, with concomitant formation of a 1,6-anhydrobond in the MurNAc residue.. Its function is as follows. Murein-degrading enzyme that degrades murein glycan strands and insoluble, high-molecular weight murein sacculi, with the concomitant formation of a 1,6-anhydromuramoyl product. Lytic transglycosylases (LTs) play an integral role in the metabolism of the peptidoglycan (PG) sacculus. Their lytic action creates space within the PG sacculus to allow for its expansion as well as for the insertion of various structures such as secretion systems and flagella. This Escherichia coli O6:K15:H31 (strain 536 / UPEC) protein is Membrane-bound lytic murein transglycosylase F.